Reading from the N-terminus, the 126-residue chain is MSSKTDEILEQLKGLTLIEAADLVKAIEEAFGVDASAPVGGGMVMMAPAAGGGADAAEEKSAFDLVLEEVPADKKIAVLKVVRSLTNLGLKEAKDLVEATPKVVKEGASKDELKQLKKNLKQLEQK.

This sequence belongs to the bacterial ribosomal protein bL12 family. Homodimer. Part of the ribosomal stalk of the 50S ribosomal subunit. Forms a multimeric L10(L12)X complex, where L10 forms an elongated spine to which 2 to 4 L12 dimers bind in a sequential fashion. Binds GTP-bound translation factors.

It localises to the plastid. The protein localises to the cyanelle. Forms part of the ribosomal stalk which helps the ribosome interact with GTP-bound translation factors. Is thus essential for accurate translation. This is Large ribosomal subunit protein bL12c from Cyanophora paradoxa.